Here is a 1388-residue protein sequence, read N- to C-terminus: ESX-5 secretion system protein EccC5 (1388 aa).

The next 2 membrane-spanning stretches (helical) occupy residues 38–58 (WLIV…AMVF) and 65–85 (FGGV…MMMF). 3 consecutive FtsK domains span residues 477-679 (GELL…GAAQ), 855-1049 (QPPW…EDAK), and 1158-1351 (LQPV…DPDE). Residues 500–507 (GTTGSGKS), 873–880 (GAGGSGKT), and 1175–1182 (GRRECGRT) contribute to the ATP site.

In terms of assembly, part of the ESX-5 / type VII secretion system (T7SS), which is composed of cytosolic and membrane components. The ESX-5 membrane complex is composed of EccB5, EccC5, EccD5 and EccE5.

It localises to the cell inner membrane. In terms of biological role, part of the ESX-5 specialized secretion system, which is responsible for the secretion of EsxN and a number of PE_PGRS and PPE proteins. This component is essential for ESX-5 complex stability and secretion. The chain is ESX-5 secretion system protein EccC5 from Mycobacterium marinum (strain ATCC BAA-535 / M).